A 456-amino-acid chain; its full sequence is 3-isopropylmalate dehydratase large subunit (456 aa).

[4Fe-4S] cluster is bound by residues Cys336, Cys396, and Cys399.

Belongs to the aconitase/IPM isomerase family. LeuC type 1 subfamily. In terms of assembly, heterodimer of LeuC and LeuD. The cofactor is [4Fe-4S] cluster.

It catalyses the reaction (2R,3S)-3-isopropylmalate = (2S)-2-isopropylmalate. Its pathway is amino-acid biosynthesis; L-leucine biosynthesis; L-leucine from 3-methyl-2-oxobutanoate: step 2/4. In terms of biological role, catalyzes the isomerization between 2-isopropylmalate and 3-isopropylmalate, via the formation of 2-isopropylmaleate. The protein is 3-isopropylmalate dehydratase large subunit of Staphylococcus saprophyticus subsp. saprophyticus (strain ATCC 15305 / DSM 20229 / NCIMB 8711 / NCTC 7292 / S-41).